A 428-amino-acid chain; its full sequence is L-fucose-proton symporter (428 aa).

Helical transmembrane passes span F10 to I30, L51 to A71, A78 to A98, Y100 to L120, F147 to L167, I204 to A224, E250 to V270, I288 to L308, E311 to I331, C339 to L359, A371 to I391, and A401 to F421.

This sequence belongs to the major facilitator superfamily. FHS transporter (TC 2.A.1.7) family.

The protein localises to the cell inner membrane. It catalyses the reaction L-fucose(in) + H(+)(in) = L-fucose(out) + H(+)(out). Mediates the uptake of L-fucose across the boundary membrane with the concomitant transport of protons into the cell (symport system). The protein is L-fucose-proton symporter (fucP) of Haemophilus influenzae (strain ATCC 51907 / DSM 11121 / KW20 / Rd).